Consider the following 330-residue polypeptide: Probable integrase/recombinase protein MJ0367 (330 aa).

The Core-binding (CB) domain maps to 22 to 112 (IEETDKIKEY…LLKVFYRVLR (91 aa)). Positions 136-325 (QHYDAVDAEM…RAESLEFIKK (190 aa)) constitute a Tyr recombinase domain. Catalysis depends on residues Arg-177, Lys-202, His-275, Arg-278, and His-301. The active-site O-(3'-phospho-DNA)-tyrosine intermediate is Tyr-310.

This sequence belongs to the 'phage' integrase family.

In Methanocaldococcus jannaschii (strain ATCC 43067 / DSM 2661 / JAL-1 / JCM 10045 / NBRC 100440) (Methanococcus jannaschii), this protein is Probable integrase/recombinase protein MJ0367.